The sequence spans 103 residues: Large ribosomal subunit protein bL21 (103 aa).

It belongs to the bacterial ribosomal protein bL21 family. As to quaternary structure, part of the 50S ribosomal subunit. Contacts protein L20.

Its function is as follows. This protein binds to 23S rRNA in the presence of protein L20. In Serratia proteamaculans (strain 568), this protein is Large ribosomal subunit protein bL21.